The following is a 510-amino-acid chain: Probable cytochrome P450 4d20 (510 aa).

Cys-455 serves as a coordination point for heme.

The protein belongs to the cytochrome P450 family. It depends on heme as a cofactor.

The protein localises to the endoplasmic reticulum membrane. The protein resides in the microsome membrane. In terms of biological role, may be involved in the metabolism of insect hormones and in the breakdown of synthetic insecticides. This is Probable cytochrome P450 4d20 (Cyp4d20) from Drosophila melanogaster (Fruit fly).